We begin with the raw amino-acid sequence, 145 residues long: 3-hydroxyacyl-[acyl-carrier-protein] dehydratase FabZ (145 aa).

The active site involves H48.

This sequence belongs to the thioester dehydratase family. FabZ subfamily.

It is found in the cytoplasm. It carries out the reaction a (3R)-hydroxyacyl-[ACP] = a (2E)-enoyl-[ACP] + H2O. Its function is as follows. Involved in unsaturated fatty acids biosynthesis. Catalyzes the dehydration of short chain beta-hydroxyacyl-ACPs and long chain saturated and unsaturated beta-hydroxyacyl-ACPs. This is 3-hydroxyacyl-[acyl-carrier-protein] dehydratase FabZ from Geobacillus thermodenitrificans (strain NG80-2).